Reading from the N-terminus, the 293-residue chain is 33 kDa chaperonin (293 aa).

2 cysteine pairs are disulfide-bonded: Cys237–Cys239 and Cys271–Cys274.

It belongs to the HSP33 family. Under oxidizing conditions two disulfide bonds are formed involving the reactive cysteines. Under reducing conditions zinc is bound to the reactive cysteines and the protein is inactive.

Its subcellular location is the cytoplasm. Functionally, redox regulated molecular chaperone. Protects both thermally unfolding and oxidatively damaged proteins from irreversible aggregation. Plays an important role in the bacterial defense system toward oxidative stress. The polypeptide is 33 kDa chaperonin (Haemophilus influenzae (strain PittGG)).